A 320-amino-acid polypeptide reads, in one-letter code: GTPase Era (320 aa).

Residues 25–193 (HCGFIAIVGR…RKHVRNHLPK (169 aa)) form the Era-type G domain. Residues 33–40 (GRPNVGKS) form a G1 region. Residue 33–40 (GRPNVGKS) participates in GTP binding. The interval 59–63 (QTTRH) is G2. The segment at 80-83 (DTPG) is G3. GTP-binding positions include 80–84 (DTPGL) and 142–145 (NKVD). Residues 142 to 145 (NKVD) form a G4 region. Residues 172–174 (ISA) are G5. Residues 216-302 (VREKLMRFTG…YLETWVKVKS (87 aa)) enclose the KH type-2 domain.

It belongs to the TRAFAC class TrmE-Era-EngA-EngB-Septin-like GTPase superfamily. Era GTPase family. As to quaternary structure, monomer.

The protein localises to the cytoplasm. The protein resides in the cell inner membrane. In terms of biological role, an essential GTPase that binds both GDP and GTP, with rapid nucleotide exchange. Plays a role in 16S rRNA processing and 30S ribosomal subunit biogenesis and possibly also in cell cycle regulation and energy metabolism. The protein is GTPase Era of Vibrio parahaemolyticus serotype O3:K6 (strain RIMD 2210633).